The sequence spans 751 residues: Dual specificity tyrosine-phosphorylation-regulated kinase 1A (751 aa).

Over residues 59-68 (YNDQIQQPLP) the composition is skewed to polar residues. Disordered stretches follow at residues 59–81 (YNDQ…RDPA) and 104–129 (YAKK…KVYN). Positions 109–126 (RRHQQGQGDDSSHKKERK) match the Bipartite nuclear localization signal motif. The 321-residue stretch at 151–471 (YEIDSLIGKG…PYYALQHSFF (321 aa)) folds into the Protein kinase domain. ATP-binding positions include 157–165 (IGKGSFGQV), K180, and 230–233 (FEML). D279 serves as the catalytic Proton acceptor. Polar residues predominate over residues 477–493 (EGTNTSNSVSTSPAMEQ). Disordered stretches follow at residues 477-532 (EGTN…HSGG), 580-667 (HVPS…GNQA), and 730-751 (GMDR…VASS). Over residues 494–517 (SQSSGTTSSTSSSSGGSSGTSNSG) the composition is skewed to low complexity. Residues 585–613 (QQNVPHHHGNGSHHHHHHHHHHHGQHVLS) form a histidine-rich domain (HRD) region. The segment covering 589–609 (PHHHGNGSHHHHHHHHHHHGQ) has biased composition (basic residues). The segment covering 611–622 (VLSNRTRTRIYN) has biased composition (polar residues). 2 stretches are compositionally biased toward low complexity: residues 623–633 (SPSTSSSTQDS) and 642–660 (SMTS…SSST). Residues 742–751 (CVQQSPVASS) show a composition bias toward polar residues.

This sequence belongs to the protein kinase superfamily. CMGC Ser/Thr protein kinase family. MNB/DYRK subfamily. Autophosphorylated on tyrosine residues.

Its subcellular location is the nucleus. The protein localises to the nucleus speckle. It carries out the reaction L-seryl-[protein] + ATP = O-phospho-L-seryl-[protein] + ADP + H(+). The catalysed reaction is L-threonyl-[protein] + ATP = O-phospho-L-threonyl-[protein] + ADP + H(+). The enzyme catalyses L-tyrosyl-[protein] + ATP = O-phospho-L-tyrosyl-[protein] + ADP + H(+). It catalyses the reaction [DNA-directed RNA polymerase] + ATP = phospho-[DNA-directed RNA polymerase] + ADP + H(+). In terms of biological role, dual-specificity kinase which possesses both serine/threonine and tyrosine kinase activities. Exhibits a substrate preference for proline at position P+1 and arginine at position P-3. Plays an important role in double-strand breaks (DSBs) repair following DNA damage. Mechanistically, phosphorylates RNF169 and increases its ability to block accumulation of TP53BP1 at the DSB sites thereby promoting homologous recombination repair (HRR). Also acts as a positive regulator of transcription by acting as a CTD kinase that mediates phosphorylation of the CTD (C-terminal domain) of the large subunit of RNA polymerase II (RNAP II) POLR2A. Modulates alternative splicing by phosphorylating the splice factor SRSF6. Phosphorylates SEPTIN4, SEPTIN5 and SF3B1. This Xenopus tropicalis (Western clawed frog) protein is Dual specificity tyrosine-phosphorylation-regulated kinase 1A.